The chain runs to 139 residues: UPF0225 protein Bpro_4182 (139 aa).

Belongs to the UPF0225 family.

The sequence is that of UPF0225 protein Bpro_4182 from Polaromonas sp. (strain JS666 / ATCC BAA-500).